A 240-amino-acid polypeptide reads, in one-letter code: MSDSSIKMPPVFGKLLLATQAHLGGVKVTKPMKKYIYGERQDKVSVFDLKKTWDKFILAARAFCGLNYGDDVTVISCKTFGKKPVLKFAETTGAKSYTGRFIPGSFTNTTIRNSCEPRLIIVSDPIVDKQAIEEAAKVNCPTIAFCNTDCDLKYVDIAIPLNNRSPKAIGASFFILSRIIRYIKFGTPMDQDIKEVELFFYRDPIELEKLQEDQNEDNYNEIFNKFSNANEDEFGKIIYK.

This sequence belongs to the universal ribosomal protein uS2 family. As to quaternary structure, component of the small ribosomal subunit. Mature ribosomes consist of a small (40S) and a large (60S) subunit. The 40S subunit contains about 33 different proteins and 1 molecule of RNA (18S). The 60S subunit contains about 49 different proteins and 3 molecules of RNA (25S, 5.8S and 5S). Interacts with RPS21.

The protein resides in the cytoplasm. Its function is as follows. Required for the assembly and/or stability of the 40S ribosomal subunit. Required for the processing of the 20S rRNA-precursor to mature 18S rRNA in a late step of the maturation of 40S ribosomal subunits. The protein is Small ribosomal subunit protein uS2 of Enterocytozoon bieneusi (strain H348) (Microsporidian parasite).